The chain runs to 103 residues: Small ribosomal subunit protein uS10 (103 aa).

This sequence belongs to the universal ribosomal protein uS10 family. Part of the 30S ribosomal subunit.

Functionally, involved in the binding of tRNA to the ribosomes. The protein is Small ribosomal subunit protein uS10 of Chromohalobacter salexigens (strain ATCC BAA-138 / DSM 3043 / CIP 106854 / NCIMB 13768 / 1H11).